We begin with the raw amino-acid sequence, 714 residues long: Cell wall protein IFF7 (714 aa).

Positions 1–19 are cleaved as a signal peptide; the sequence is MLFTLSILSTLLFSTSISA. N-linked (GlcNAc...) asparagine glycosylation occurs at asparagine 200. The span at 320–330 shows a compositional bias: polar residues; the sequence is GPVPSQKSLPS. Disordered regions lie at residues 320 to 633 and 660 to 692; these read GPVP…AADS and PIANESSSPSSSSSSSSSSSGTPGEVIPNANGS. Over residues 346-504 the composition is skewed to low complexity; it reads GSSSSSSVVS…SSTPLSGDSS (159 aa). N-linked (GlcNAc...) asparagine glycans are attached at residues asparagine 390, asparagine 394, asparagine 399, asparagine 421, and asparagine 473. Polar residues predominate over residues 505-519; it reads QVSSLTTGTSPDTIA. Residues 520–544 show a composition bias toward low complexity; the sequence is SFQTDSTSFGFGSGSPSSGAVQSSG. The span at 545–558 shows a compositional bias: polar residues; the sequence is VTNSTPNTGDVNTQ. 2 stretches are compositionally biased toward low complexity: residues 559 to 590 and 597 to 625; these read SNTANIATSDNTATSTASNDTGVNTATATTTG and NNNNNNNNNNNNNNNNNNNNNNNNNNTNN. Residues asparagine 577, asparagine 621, asparagine 624, and asparagine 663 are each glycosylated (N-linked (GlcNAc...) asparagine). Low complexity predominate over residues 665–679; it reads SSSPSSSSSSSSSSS. A glycan (N-linked (GlcNAc...) asparagine) is linked at asparagine 690. A lipid anchor (GPI-anchor amidated asparagine) is attached at asparagine 690. The propeptide at 691-714 is removed in mature form; sequence GSSKLSIGMTFMISGFATMFALFM.

The protein belongs to the HYR1/IFF family. Post-translationally, the GPI-anchor is attached to the protein in the endoplasmic reticulum and serves to target the protein to the cell surface. There, the glucosamine-inositol phospholipid moiety is cleaved off and the GPI-modified mannoprotein is covalently attached via its lipidless GPI glycan remnant to the 1,6-beta-glucan of the outer cell wall layer.

The protein localises to the secreted. The protein resides in the cell wall. Its subcellular location is the membrane. Functionally, GPI-anchored cell wall protein involved in cell wall organization, hyphal growth, as well as in host-fungal interaction and virulence. This is Cell wall protein IFF7 (IFF8) from Candida albicans (strain SC5314 / ATCC MYA-2876) (Yeast).